The following is a 484-amino-acid chain: Regulator of G-protein signaling 9 (484 aa).

The DEP domain occupies 30 to 105 (PDTGVRVQNQ…PDSSLYRFQT (76 aa)). In terms of domain architecture, G protein gamma spans 219 to 280 (VVSVRKEIMY…ITDDTQFWDL (62 aa)). Residues 299 to 414 (NFSELIRDPK…LKSPIYKEML (116 aa)) enclose the RGS domain. Residues 460–484 (TTVDITQVMSKLDRRSQLRKEPPPK) form a disordered region. Positions 470–484 (KLDRRSQLRKEPPPK) are enriched in basic and acidic residues.

In terms of assembly, heterodimer with GNB5. Interacts with RGS7BP, leading to regulate the subcellular location of the heterodimer formed with GNB5. Component of the RGS9-1-Gbeta5 complex composed of RGS9 (RGS9-1), Gbeta5 (GNB5) and RGS9BP. Interacts with PDE6G and GNAT1. Phosphorylation is decreased by light exposition. As to expression, photoreceptor outer segments.

The protein localises to the membrane. Inhibits signal transduction by increasing the GTPase activity of G protein alpha subunits thereby driving them into their inactive GDP-bound form. Binds to GNAT1. Involved in phototransduction; key element in the recovery phase of visual transduction. This is Regulator of G-protein signaling 9 (RGS9) from Bos taurus (Bovine).